A 393-amino-acid chain; its full sequence is Interferon regulatory factor 9 (393 aa).

The IRF tryptophan pentad repeat DNA-binding region spans 9–116 (TRKLRNWVVE…EPYKVYQLLP (108 aa)). 2 disordered regions span residues 120 to 151 (VSGQ…AMQN) and 163 to 202 (LNNE…APFQ). Residue Ser-139 is modified to Phosphoserine.

It belongs to the IRF family. In terms of assembly, interacts with STAT2 in the cytoplasm. Forms the interferon-stimulated gene factor 3 complex (ISGF3) with the heterodimer STAT1:STAT2; upon stimulation. (Microbial infection) Interacts with measles virus V protein; this interaction prevents the binding of IRF9 to STAT2 and thereby the type I interferon signaling pathway. Post-translationally, (Microbial infection) Ubiquitinated by Herpes simplex virus 2 E3 ubiquitin ligase ICP22.

Its subcellular location is the cytoplasm. It is found in the nucleus. In terms of biological role, transcription factor that plays an essential role in anti-viral immunity. It mediates signaling by type I IFNs (IFN-alpha and IFN-beta). Following type I IFN binding to cell surface receptors, Jak kinases (TYK2 and JAK1) are activated, leading to tyrosine phosphorylation of STAT1 and STAT2. IRF9/ISGF3G associates with the phosphorylated STAT1:STAT2 dimer to form a complex termed ISGF3 transcription factor, that enters the nucleus. ISGF3 binds to the IFN stimulated response element (ISRE) to activate the transcription of interferon stimulated genes, which drive the cell in an antiviral state. The protein is Interferon regulatory factor 9 (IRF9) of Homo sapiens (Human).